We begin with the raw amino-acid sequence, 365 residues long: Galactoside alpha-(1,2)-fucosyltransferase 1 (365 aa).

At 1–8 the chain is on the cytoplasmic side; sequence MWPLSHRH. A helical; Signal-anchor for type II membrane protein membrane pass occupies residues 9–25; it reads LCLAFLLVCVLSAISFF. Residues 26–365 are Lumenal-facing; sequence LHIYQDSIRH…LSPLWTLAEP (340 aa). N65, N301, and N327 each carry an N-linked (GlcNAc...) asparagine glycan.

It belongs to the glycosyltransferase 11 family.

Its subcellular location is the golgi apparatus. It localises to the golgi stack membrane. It catalyses the reaction a beta-D-galactosyl-(1-&gt;4)-N-acetyl-beta-D-glucosaminyl derivative + GDP-beta-L-fucose = an alpha-L-Fuc-(1-&gt;2)-beta-D-Gal-(1-&gt;4)-beta-D-GlcNAc derivative + GDP + H(+). The enzyme catalyses a ganglioside GA1 + GDP-beta-L-fucose = a ganglioside Fuc-GA1 + GDP + H(+). It carries out the reaction a beta-D-Gal-(1-&gt;3)-beta-D-GlcNAc-(1-&gt;3)-beta-D-Gal-(1-&gt;4)-beta-D-Glc-(1&lt;-&gt;1')-Cer(d18:1(4E)) + GDP-beta-L-fucose = alpha-L-fucosyl-(1-&gt;2)- beta-D-galactosyl-(1-&gt;3)-N-acetyl-beta-D-glucosaminyl-(1-&gt;3)-beta-D-galactosyl-(1-&gt;4)-beta-D-glucosyl-(1&lt;-&gt;1')-N-acylsphing-4-enine + GDP + H(+). The catalysed reaction is a neolactoside nLc4Cer(d18:1(4E)) + GDP-beta-L-fucose = a neolactoside IV(2)-alpha-Fuc-nLc4Cer(d18:1(4E)) + GDP + H(+). It catalyses the reaction a ganglioside GM1 + GDP-beta-L-fucose = a ganglioside Fuc-GM1 + GDP + H(+). The enzyme catalyses beta-D-galactosyl-(1-&gt;3)-N-acetyl-D-galactosamine + GDP-beta-L-fucose = alpha-L-fucosyl-(1-&gt;2)-beta-D-galactosyl-(1-&gt;3)-N-acetyl-D-galactosamine + GDP + H(+). It participates in protein modification; protein glycosylation. Functionally, catalyzes the transfer of L-fucose, from a guanosine diphosphate-beta-L-fucose, to the terminal galactose residue of glycoconjugates through an alpha(1,2) linkage leading to H antigen synthesis that is an intermediate substrate in the synthesis of ABO blood group antigens. H antigen is essential for maturation of the glomerular layer of the main olfactory bulb, in cell migration and early cell-cell contacts during tumor associated angiogenesis. Preferentially fucosylates soluble lactose and to a lesser extent fucosylates glycolipids gangliosides GA1 and GM1a. The polypeptide is Galactoside alpha-(1,2)-fucosyltransferase 1 (Mico humeralifer (Black and white tassel-ear marmoset)).